We begin with the raw amino-acid sequence, 239 residues long: Sugar fermentation stimulation protein homolog (239 aa).

It belongs to the SfsA family.

The protein is Sugar fermentation stimulation protein homolog of Desulforamulus reducens (strain ATCC BAA-1160 / DSM 100696 / MI-1) (Desulfotomaculum reducens).